Reading from the N-terminus, the 266-residue chain is Protein crossbronx-like (266 aa).

One can recognise a UBC core domain in the interval 15–178 (KQGYHILAEY…VQEQAILSRN (164 aa)). The disordered stretch occupies residues 234-266 (SSRQLDEEEANQVEKLHRGRIPEHQREESEVSL). The span at 245–266 (QVEKLHRGRIPEHQREESEVSL) shows a compositional bias: basic and acidic residues.

It belongs to the ubiquitin-conjugating enzyme family. FTS subfamily.

This is Protein crossbronx-like from Drosophila melanogaster (Fruit fly).